An 88-amino-acid polypeptide reads, in one-letter code: Putative membrane protein insertion efficiency factor (88 aa).

The protein belongs to the UPF0161 family.

The protein resides in the cell inner membrane. Its function is as follows. Could be involved in insertion of integral membrane proteins into the membrane. This Prochlorococcus marinus (strain MIT 9313) protein is Putative membrane protein insertion efficiency factor.